Here is a 132-residue protein sequence, read N- to C-terminus: MIVRNVKDVIGTPDEVRTDTWVSRRVLLKKDKMGFSFHETTIFPGTRTHIHYKNHLEAVWCIEGDGSIETIADGKRYDLGPGVVYALNEHDEHWLCGGKEPLRVICVFNPPLTGQEVHDADGVYALPQAETA.

Belongs to the ectoine synthase family.

The catalysed reaction is (2S)-4-acetamido-2-aminobutanoate = L-ectoine + H2O. It functions in the pathway amine and polyamine biosynthesis; ectoine biosynthesis; L-ectoine from L-aspartate 4-semialdehyde: step 3/3. In terms of biological role, catalyzes the circularization of gamma-N-acetyl-alpha,gamma-diaminobutyric acid (ADABA) to ectoine (1,4,5,6-tetrahydro-2-methyl-4-pyrimidine carboxylic acid), which is an excellent osmoprotectant. The sequence is that of L-ectoine synthase from Bordetella avium (strain 197N).